A 1021-amino-acid chain; its full sequence is Ubiquitin-activating enzyme E1 1 (1021 aa).

ATP contacts are provided by Arg-22, Ala-442, and Asp-468. Residue Asp-470 coordinates Mg(2+). ATP-binding positions include Arg-479, Lys-492, Val-518, and 542–543; that span reads DN. Asp-542 is a binding site for Mg(2+). The Glycyl thioester intermediate role is filled by Cys-598.

This sequence belongs to the ubiquitin-activating E1 family. In terms of assembly, monomer.

Its subcellular location is the cytoplasm. It localises to the nucleus. The catalysed reaction is ATP + ubiquitin + [E1 ubiquitin-activating enzyme]-L-cysteine = AMP + diphosphate + S-ubiquitinyl-[E1 ubiquitin-activating enzyme]-L-cysteine.. The protein operates within protein modification; protein ubiquitination. In terms of biological role, E1 ubiquitin-activating enzyme that catalyzes the first step in ubiquitin conjugation to mark cellular proteins for degradation through the ubiquitin-proteasome system. Activates ubiquitin by first adenylating its C-terminal glycine residue with ATP, and thereafter linking this residue to the side chain of a cysteine residue in E1, yielding a ubiquitin-E1 thioester and free AMP. The chain is Ubiquitin-activating enzyme E1 1 (UBA1) from Candida albicans (strain WO-1) (Yeast).